The following is a 634-amino-acid chain: DNA-directed RNA polymerase subunit gamma (634 aa).

Positions 74, 76, 89, and 92 each coordinate Zn(2+). Mg(2+) contacts are provided by D471, D473, and D475.

This sequence belongs to the RNA polymerase beta' chain family. RpoC1 subfamily. In cyanobacteria the RNAP catalytic core is composed of 2 alpha, 1 beta, 1 beta', 1 gamma and 1 omega subunit. When a sigma factor is associated with the core the holoenzyme is formed, which can initiate transcription. It depends on Mg(2+) as a cofactor. Zn(2+) is required as a cofactor.

It carries out the reaction RNA(n) + a ribonucleoside 5'-triphosphate = RNA(n+1) + diphosphate. Functionally, DNA-dependent RNA polymerase catalyzes the transcription of DNA into RNA using the four ribonucleoside triphosphates as substrates. This is DNA-directed RNA polymerase subunit gamma from Prochlorococcus marinus (strain AS9601).